A 616-amino-acid polypeptide reads, in one-letter code: MPVAQKLPHLPESPGVYLWKDVEGQVLYVGKAKRLRSRVRSYWAQEHESSPKTRAMVRKVRDLETIVVPSEAHALILEATLIKEYHPRFNIALRDDKSYPYIRVTVNEPFPRVMVTRRLLDDGARYFGPYTDVGAMRRALNVVKRIFTVRSCHYALPGEAPERPCLDYSIKRCKAPCVGYQSREDYRAMIDEVVWFLDGRTSDVMHHVRERMLDASERLDFERAAELRDALAHLEKMESPSVVLEVEGGDRDVVGYARDGEDACVAVMRIRGGKLLARDHRLLEHAEDEEDGAVLGACLAQWYRTAEARAGELLVPFDFEDRESLEASLDGTHIRVPQRGPRRALVDLADQNARHLLEEFKLAALEADERAVDPVYELQRELGLPRLPRSLVCFDISHAQGTDVVASAVFFENGRPKRSEYRKFKIKVFEGNDDFRSMHEVVTRYFRRRLDEEKPLPDLAVIDGGKGQLGAARAALDELGAPQIGLISLAKREEEIFQYGRPDPVRLPRRSPALRMLQQARDEAHRFAITFQRQKRAARTITSELLKIPGVGPTKRRALLHTFGSVQGVREASVEQIAAIPGFGAASARRLLEALGVAVPDVSAPTIDSPSDPPLS.

The GIY-YIG domain occupies Glu12–Ile91. Residues Ser202 to Met237 enclose the UVR domain.

It belongs to the UvrC family. In terms of assembly, interacts with UvrB in an incision complex.

The protein localises to the cytoplasm. Its function is as follows. The UvrABC repair system catalyzes the recognition and processing of DNA lesions. UvrC both incises the 5' and 3' sides of the lesion. The N-terminal half is responsible for the 3' incision and the C-terminal half is responsible for the 5' incision. In Gemmatimonas aurantiaca (strain DSM 14586 / JCM 11422 / NBRC 100505 / T-27), this protein is UvrABC system protein C.